Consider the following 200-residue polypeptide: Glycerol-3-phosphate acyltransferase (200 aa).

5 helical membrane-spanning segments follow: residues 2–22, 51–71, 84–104, 114–134, and 158–178; these read FNIP…AVIV, KAAA…VLLA, AIAA…FFGF, LGVL…IWLV, and LFFM…ILVL.

The protein belongs to the PlsY family. In terms of assembly, probably interacts with PlsX.

It is found in the cell inner membrane. It catalyses the reaction an acyl phosphate + sn-glycerol 3-phosphate = a 1-acyl-sn-glycero-3-phosphate + phosphate. It participates in lipid metabolism; phospholipid metabolism. Catalyzes the transfer of an acyl group from acyl-phosphate (acyl-PO(4)) to glycerol-3-phosphate (G3P) to form lysophosphatidic acid (LPA). This enzyme utilizes acyl-phosphate as fatty acyl donor, but not acyl-CoA or acyl-ACP. The sequence is that of Glycerol-3-phosphate acyltransferase from Neisseria gonorrhoeae (strain ATCC 700825 / FA 1090).